The following is a 1168-amino-acid chain: ATP-dependent DNA helicase mph1 (1168 aa).

Polar residues-rich tracts occupy residues 24 to 38 (NITS…QLAS) and 59 to 68 (PTVSQGQATA). A disordered region spans residues 24-132 (NITSHHPSNS…PFRADMPPEQ (109 aa)). A compositionally biased stretch (low complexity) spans 71-88 (RAKTASKPTTSATTSRPS). Residues 89 to 104 (LAQSSQRKNLRQTTLW) are compositionally biased toward polar residues. The Helicase ATP-binding domain occupies 162 to 330 (IVKNGLFNNT…DVIDNLGISH (169 aa)). 175-182 (LPTGLGKT) is a binding site for ATP. Residues 278 to 281 (DEAH) carry the DEAH box motif. Residues 506–665 (LVNHFMDAGE…GSRFTFRHDL (160 aa)) form the Helicase C-terminal domain. Disordered stretches follow at residues 690–717 (SQNP…FNMP) and 830–1168 (APAN…DDQE). A compositionally biased stretch (basic residues) spans 701 to 714 (SAARMRTKPAKKKF). The span at 895–907 (TAKTKSTGVSKQT) shows a compositional bias: polar residues. Positions 920–936 (DCEEGGNEYDGNVDDDE) are enriched in acidic residues. Over residues 941–959 (RNFRSKGRGRGSGRGKKSQ) the composition is skewed to basic residues. Positions 985–996 (GSDDGADLEDFI) are enriched in acidic residues. Over residues 1001–1030 (EVTSSLQHRPRGSTSPTTAPDAGSSSLSSK) the composition is skewed to polar residues.

It belongs to the DEAD box helicase family. DEAH subfamily. FANCM sub-subfamily. In terms of assembly, interacts with the MHF histone-fold complex to form the FANCM-MHF complex.

It is found in the nucleus. It carries out the reaction ATP + H2O = ADP + phosphate + H(+). Functionally, ATP-dependent DNA helicase involved in DNA damage repair by homologous recombination and in genome maintenance. Capable of unwinding D-loops. Plays a role in limiting crossover recombinants during mitotic DNA double-strand break (DSB) repair. Component of a FANCM-MHF complex which promotes gene conversion at blocked replication forks, probably by reversal of the stalled fork. The sequence is that of ATP-dependent DNA helicase mph1 from Neurospora crassa (strain ATCC 24698 / 74-OR23-1A / CBS 708.71 / DSM 1257 / FGSC 987).